A 522-amino-acid chain; its full sequence is Sensory neuron membrane protein 1 (522 aa).

Over 1–11 (MKLPKHLKFAA) the chain is Cytoplasmic. The chain crosses the membrane as a helical span at residues 12–32 (GAGGAFLFGILFGWVMFPAIL). Over 33–455 (KGQLKKEMAL…KFQLFYPKKA (423 aa)) the chain is Extracellular. Asn-67 and Asn-229 each carry an N-linked (GlcNAc...) asparagine glycan. 3 disulfide bridges follow: Cys-268/Cys-333, Cys-297/Cys-350, and Cys-335/Cys-339. A glycan (N-linked (GlcNAc...) asparagine) is linked at Asn-438. Residues 456–476 (VGVIKWLLVTFGGFGLIGCTI) form a helical membrane-spanning segment. Topologically, residues 477-522 (YHYKDRIMSFASSPGSAAVTKVKPEEVEQKDVSVIGQPQEPAKINM) are cytoplasmic.

Belongs to the CD36 family.

It localises to the cell membrane. Its function is as follows. Plays an olfactory role that is not restricted to pheromone sensitivity. The sequence is that of Sensory neuron membrane protein 1 from Plutella xylostella (Diamondback moth).